A 612-amino-acid chain; its full sequence is PAN2-PAN3 deadenylation complex subunit PAN3 (612 aa).

The C3H1-type zinc finger occupies 10-39 (WAKDTPCKNITIYGYCKYENDGCIFNHGKP). Residues 44 to 62 (SNTGGAAAGSAEDSAASGG) show a composition bias toward low complexity. The tract at residues 44 to 64 (SNTGGAAAGSAEDSAASGGVT) is disordered. 2 consecutive short sequence motifs (PABPC-interacting motif-2 (PAM-2)) follow at residues 84–104 (SVAI…IVSS) and 111–131 (TAFT…SANV). The tract at residues 231–481 (QVFPSDGNLP…TIAEFTALFS (251 aa)) is pseudokinase domain. Residues R286, 336-343 (DYYPQSNS), and 389-390 (DK) contribute to the ATP site. The stretch at 482–520 (HKMLDIISSSQTYSEYIEQHLSRELENGRLFRLMCKLNF) forms a coiled coil. The interval 521 to 612 (IFGRMESSMD…IDSTFRSMTQ (92 aa)) is knob domain.

This sequence belongs to the protein kinase superfamily. PAN3 family. Homodimer. Forms a heterotrimer with a catalytic subunit PAN2 to form the poly(A)-nuclease (PAN) deadenylation complex. Interacts (via PAM-2 motif) with poly(A)-binding protein PAB1 (via PABC domain), conferring substrate specificity of the enzyme complex.

The protein resides in the cytoplasm. Functionally, regulatory subunit of the poly(A)-nuclease (PAN) deadenylation complex, one of two cytoplasmic mRNA deadenylases involved in mRNA turnover. PAN specifically shortens poly(A) tails of RNA and the activity is stimulated by poly(A)-binding protein PAB1. PAN deadenylation is followed by rapid degradation of the shortened mRNA tails by the CCR4-NOT complex. Deadenylated mRNAs are then degraded by two alternative mechanisms, namely exosome-mediated 3'-5' exonucleolytic degradation, or deadenylation-dependent mRNA decaping and subsequent 5'-3' exonucleolytic degradation by XRN1. May also be involved in post-transcriptional maturation of mRNA poly(A) tails. PAN3 acts as a positive regulator for PAN activity, recruiting the catalytic subunit PAN2 to mRNA via its interaction with RNA and with PAB1. The protein is PAN2-PAN3 deadenylation complex subunit PAN3 of Eremothecium gossypii (strain ATCC 10895 / CBS 109.51 / FGSC 9923 / NRRL Y-1056) (Yeast).